We begin with the raw amino-acid sequence, 293 residues long: Single-pass membrane and coiled-coil domain-containing protein 2 (293 aa).

A coiled-coil region spans residues 116–188 (KNLLEFLLKD…SAKLRMYQME (73 aa)). Residues 234 to 254 (IFIMFYVLTVTGLLCYILFFG) traverse the membrane as a helical segment.

Its subcellular location is the membrane. The protein is Single-pass membrane and coiled-coil domain-containing protein 2 (SMCO2) of Macaca fascicularis (Crab-eating macaque).